Reading from the N-terminus, the 178-residue chain is MEQFHGTTIVSVRRGDKVALGGDGQVTLGNIVMKGGARKVRRIYNNQVLVGFAGGTADAFSLLDRFEAKLEKHQGNLTRAAVELAKDWRTDRMLRRLEAMLITADATTTLVITGNGDVLDPEGGICAIGSGGAYAQAAARALAENTELSPREIVEKSLEIAGDMCIYTNHNRIIETIE.

Residue Thr7 is part of the active site. 3 residues coordinate Na(+): Gly162, Cys165, and Thr168.

It belongs to the peptidase T1B family. HslV subfamily. In terms of assembly, a double ring-shaped homohexamer of HslV is capped on each side by a ring-shaped HslU homohexamer. The assembly of the HslU/HslV complex is dependent on binding of ATP.

It is found in the cytoplasm. It carries out the reaction ATP-dependent cleavage of peptide bonds with broad specificity.. With respect to regulation, allosterically activated by HslU binding. Functionally, protease subunit of a proteasome-like degradation complex believed to be a general protein degrading machinery. The protein is ATP-dependent protease subunit HslV of Burkholderia ambifaria (strain MC40-6).